A 129-amino-acid chain; its full sequence is Lysozyme C (129 aa).

Positions 1–129 (KVYGRCELAA…VSVWTRGCRL (129 aa)) constitute a C-type lysozyme domain. 4 disulfide bridges follow: Cys-6-Cys-127, Cys-30-Cys-115, Cys-64-Cys-80, and Cys-76-Cys-94. Active-site residues include Glu-35 and Asp-52.

The protein belongs to the glycosyl hydrolase 22 family. As to quaternary structure, monomer.

Its subcellular location is the secreted. It catalyses the reaction Hydrolysis of (1-&gt;4)-beta-linkages between N-acetylmuramic acid and N-acetyl-D-glucosamine residues in a peptidoglycan and between N-acetyl-D-glucosamine residues in chitodextrins.. In terms of biological role, lysozymes have primarily a bacteriolytic function; those in tissues and body fluids are associated with the monocyte-macrophage system and enhance the activity of immunoagents. This Lophura leucomelanos (Kalij pheasant) protein is Lysozyme C (LYZ).